We begin with the raw amino-acid sequence, 375 residues long: Beta sliding clamp (375 aa).

Belongs to the beta sliding clamp family. In terms of assembly, forms a ring-shaped head-to-tail homodimer around DNA which binds and tethers DNA polymerases and other proteins to the DNA. The DNA replisome complex has a single clamp-loading complex (3 tau and 1 each of delta, delta', psi and chi subunits) which binds 3 Pol III cores (1 core on the leading strand and 2 on the lagging strand) each with a beta sliding clamp dimer. Additional proteins in the replisome are other copies of gamma, psi and chi, Ssb, DNA helicase and RNA primase.

The protein localises to the cytoplasm. Confers DNA tethering and processivity to DNA polymerases and other proteins. Acts as a clamp, forming a ring around DNA (a reaction catalyzed by the clamp-loading complex) which diffuses in an ATP-independent manner freely and bidirectionally along dsDNA. Initially characterized for its ability to contact the catalytic subunit of DNA polymerase III (Pol III), a complex, multichain enzyme responsible for most of the replicative synthesis in bacteria; Pol III exhibits 3'-5' exonuclease proofreading activity. The beta chain is required for initiation of replication as well as for processivity of DNA replication. The polypeptide is Beta sliding clamp (dnaN) (Synechococcus elongatus (strain ATCC 33912 / PCC 7942 / FACHB-805) (Anacystis nidulans R2)).